The primary structure comprises 474 residues: MTNPIHIVGGGLAGSEAAWQVAQGGRTVVLHEMRPVRATDAHHTDGLAELVCSNSFRSDDANGNAVGLLHQEMRSLDSLIMRTADAHQVPAGGALAVDREGFSRAVTAALEDHPNITILREEVAGLPPEDWGSTILATGPLTSPALAEAVGTLTGRESLAFFDAIAPIVHRDSIDMGKAWFQSRYDKAGPGGTGADYLNCPMDREQYEAFVAALIAGEKTAFKEWEASTPYFDGCLPIEVMAERGPETLRHGPMKPVGLTNPHNPTVKAYAIVQLRQDNALGTLFNMVGFQTKLRHAEQVRVFRTIPGLENAEFARLGGLHRNTYLDSPRLLDATLRLKARPQLRFAGQITGCEGYVESAAVGLMAGRYALAEAEGQTLAPLPPTTALGALIGHITGGHVEATEEAERNAPRSFQPMNVNFGLFPPLAQMPRNETGKRLRGPEKAALKKRALTDRARADLAAWMTGERLPHAAE.

9–14 serves as a coordination point for FAD; sequence GGGLAG.

The protein belongs to the MnmG family. TrmFO subfamily. It depends on FAD as a cofactor.

The protein resides in the cytoplasm. It carries out the reaction uridine(54) in tRNA + (6R)-5,10-methylene-5,6,7,8-tetrahydrofolate + NADH + H(+) = 5-methyluridine(54) in tRNA + (6S)-5,6,7,8-tetrahydrofolate + NAD(+). The enzyme catalyses uridine(54) in tRNA + (6R)-5,10-methylene-5,6,7,8-tetrahydrofolate + NADPH + H(+) = 5-methyluridine(54) in tRNA + (6S)-5,6,7,8-tetrahydrofolate + NADP(+). Functionally, catalyzes the folate-dependent formation of 5-methyl-uridine at position 54 (M-5-U54) in all tRNAs. The chain is Methylenetetrahydrofolate--tRNA-(uracil-5-)-methyltransferase TrmFO from Methylorubrum extorquens (strain PA1) (Methylobacterium extorquens).